Here is a 208-residue protein sequence, read N- to C-terminus: Probable GTP-binding protein EngB (208 aa).

Positions Leu-23 to Thr-205 constitute an EngB-type G domain. Residues Gly-31 to Ser-38, Gly-57 to Leu-61, Asp-84 to Gly-87, Thr-154 to Asp-157, and Phe-182 to Ala-184 contribute to the GTP site. Mg(2+) contacts are provided by Ser-38 and Thr-59.

The protein belongs to the TRAFAC class TrmE-Era-EngA-EngB-Septin-like GTPase superfamily. EngB GTPase family. Mg(2+) serves as cofactor.

Necessary for normal cell division and for the maintenance of normal septation. This chain is Probable GTP-binding protein EngB, found in Helicobacter pylori (strain Shi470).